A 72-amino-acid chain; its full sequence is Aurein-2.2 (72 aa).

The signal sequence occupies residues 1–22 (MAFLKKSLFLVLFLGLVSLSIC). Positions 23-49 (EKEKRQNEEDEDENEAANHEEGSEEKR) are excised as a propeptide. The segment at 27-47 (RQNEEDEDENEAANHEEGSEE) is disordered. The span at 38–47 (AANHEEGSEE) shows a compositional bias: basic and acidic residues. Leucine 65 bears the Leucine amide mark. Residues 69–72 (NDLE) constitute a propeptide that is removed on maturation.

Amidation is essential for antibacterial activity against Gram-positive bacteria. As to expression, expressed by the skin dorsal glands.

The protein localises to the secreted. It is found in the target cell membrane. Functionally, amphipathic alpha-helical antimicrobial peptide with weak to moderate activity against Gram-positive bacteria, and no activity against Gram-negative bacteria. Probably acts by disturbing membrane functions with its amphipathic structure. Strongly inhibits the formation of NO by neuronal nitric oxide synthase (nNOS) at micromolar concentrations. Acts by a non-competitive mechanism, probably by binding to calcium/calmodulin and as a consequence blocking calmodulin attachment to nNOS. This chain is Aurein-2.2, found in Ranoidea aurea (Green and golden bell frog).